A 135-amino-acid chain; its full sequence is uncharacterized protein (135 aa).

This is an uncharacterized protein from Homo sapiens (Human).